The sequence spans 419 residues: MEPILIPSQHNRLVIPSEPNEEEFNYIADGYKGKLNIDSYDIISTIGSGSYGEVCIVREKSTKQVYAMKKIYYTEVSDTELVKKRALRERDAMVICNNKNNKRAPKLYCSFIDDNEGVFYYVMEFIAGGDFNSYCYKRLVDGKKFTEEEIKFYIAELVLCLEAFHSYGLLHRDVKPENLMINKDGHLVLGDFGSSKLANNSGGGGGNFGNTLTVPMSTSYSTSPSSSISSSLLGGSGGFTPSHWNGMAGSAGSSFGSSSLGRSFDNTPPNFNSFLRNPHSSYTSYIGTPQYMAVEVVQGVNYSKLCDFWSLGAILFELVTGQALFVESPDTTEQKIRENIGNWRGLLNTAVQKNQPMSKQAESLIRECIAPERKRPDASTIKKHPFFEGINWEEMANFNVEPPFKPTLSSDDDISYFTN.

In terms of domain architecture, Protein kinase spans Y40–F387. Residues I46–V54 and K69 contribute to the ATP site. Residue D173 is the Proton acceptor of the active site. Residues E388–N419 enclose the AGC-kinase C-terminal domain.

It belongs to the protein kinase superfamily. AGC Ser/Thr protein kinase family.

The catalysed reaction is L-seryl-[protein] + ATP = O-phospho-L-seryl-[protein] + ADP + H(+). It catalyses the reaction L-threonyl-[protein] + ATP = O-phospho-L-threonyl-[protein] + ADP + H(+). The protein is Probable serine/threonine-protein kinase DDB_G0290859 of Dictyostelium discoideum (Social amoeba).